We begin with the raw amino-acid sequence, 761 residues long: Probable beta-galactosidase 2 (761 aa).

The signal sequence occupies residues 1-23 (MGTIKNNFQLLWLILLIVVLVNG). N-linked (GlcNAc...) asparagine glycosylation is found at N39 and N110. E195 functions as the Proton donor in the catalytic mechanism. N-linked (GlcNAc...) asparagine glycosylation occurs at N206. Catalysis depends on E267, which acts as the Nucleophile. 11 N-linked (GlcNAc...) asparagine glycosylation sites follow: N385, N405, N438, N501, N552, N553, N577, N592, N642, N690, and N696.

Belongs to the glycosyl hydrolase 35 family.

It catalyses the reaction Hydrolysis of terminal non-reducing beta-D-galactose residues in beta-D-galactosides.. Cleaves beta-linked terminal galactosyl residues from gangliosides, glycoproteins, and glycosaminoglycans. This Dictyostelium discoideum (Social amoeba) protein is Probable beta-galactosidase 2 (glb2).